A 473-amino-acid chain; its full sequence is Cysteine--tRNA ligase (473 aa).

Residue C30 coordinates Zn(2+). The 'HIGH' region motif lies at 32-42; sequence MTVYDYCHIGH. Zn(2+) contacts are provided by C213, H238, and E242. A 'KMSKS' region motif is present at residues 270-274; it reads KMSKS. ATP is bound at residue K273.

This sequence belongs to the class-I aminoacyl-tRNA synthetase family. As to quaternary structure, monomer. The cofactor is Zn(2+).

The protein resides in the cytoplasm. The enzyme catalyses tRNA(Cys) + L-cysteine + ATP = L-cysteinyl-tRNA(Cys) + AMP + diphosphate. In Acinetobacter baylyi (strain ATCC 33305 / BD413 / ADP1), this protein is Cysteine--tRNA ligase.